We begin with the raw amino-acid sequence, 212 residues long: Nascent polypeptide-associated complex subunit alpha-like protein 4 (212 aa).

Residues 25–35 (QKENDVVVEDV) are compositionally biased toward basic and acidic residues. Residues 25–74 (QKENDVVVEDVKDGDEDDDDVDDDDDEIADGAGENEASKQSRSEKKSRKA) form a disordered region. A compositionally biased stretch (acidic residues) spans 36 to 53 (KDGDEDDDDVDDDDDEIA). The region spanning 65-130 (SRSEKKSRKA…AKIDDMSSQL (66 aa)) is the NAC-A/B domain. The 38-residue stretch at 173 to 210 (VEAKDIDLVMTQAGVSRPKAVKALKESNGDIVSAIMEL) folds into the UBA domain.

It belongs to the NAC-alpha family.

May promote appropriate targeting of ribosome-nascent polypeptide complexes. This chain is Nascent polypeptide-associated complex subunit alpha-like protein 4, found in Arabidopsis thaliana (Mouse-ear cress).